The sequence spans 335 residues: Non-structural protein P9-1 (335 aa).

Residues 27–42 (FNANTKNQNQNTSNTQ) are compositionally biased toward low complexity. Positions 27–48 (FNANTKNQNQNTSNTQSSGGIT) are disordered.

This is Non-structural protein P9-1 (S9) from Fiji disease virus (isolate Sugarcane) (FDV).